We begin with the raw amino-acid sequence, 88 residues long: Large ribosomal subunit protein bL27 (88 aa).

The protein belongs to the bacterial ribosomal protein bL27 family.

This chain is Large ribosomal subunit protein bL27, found in Mycolicibacterium vanbaalenii (strain DSM 7251 / JCM 13017 / BCRC 16820 / KCTC 9966 / NRRL B-24157 / PYR-1) (Mycobacterium vanbaalenii).